The following is a 536-amino-acid chain: MVELTEFQKRRQENIKRNNDLLKKLHLGGAASRIKREAGVDDTHRTVVKKKKSPSVSRGRSASPKVAPVATRRSMRLRGEKVDNVGIPNVSDTQLMKMSLDGTSGSSVNDKELVDEIKDTPVIGDVKLSDLIKDEKEENLIEKFKSFANKNFSSGDFFEEIRKRQMENKAPELQKLQDDFDLQLYDVFQPNEIKLVYERITATYFHPSLDKKLIVAGDTSGNIGLWNVRDEPLSENGEDQMVEPDITKVKFFTKNVGKIDCFTSDTSKLLTASYDGSLRSIDLNSLQSNDILTLRNEYDDPLGISDFQFSYENPNVLLMTTLSGEFVNIDLREKIGEQISSNLRRLSDKKIGSFSINPNRPYEIATGSLDRTLKIWDIRKLVKKPEWSQYEDYDSCEIVSVYDSRLSVSAVSYSPTDNTLVCNGYDDTIRLFDVGSDNLPDDLQPKLTLKHNCQSGRWTSILKARFKQDQDVFAIANMKRAIDIYDSQGQQLAHLPTATVPAVISWHPLRNWIAGGNSSGKIFLFTDETVKKEEEE.

Residues 36–45 (REAGVDDTHR) show a composition bias toward basic and acidic residues. Positions 36–72 (REAGVDDTHRTVVKKKKSPSVSRGRSASPKVAPVATR) are disordered. 6 WD repeats span residues 195–236 (LVYE…LSEN), 251–291 (FFTK…SNDI), 346–386 (LSDK…KKPE), 403–442 (DSRLSVSAVSYSPTDNTLVCNGYDDTIRLFDVGSDNLPDD), 456–495 (GRWTSILKARFKQDQDVFAIANMKRAIDIYDSQGQQLAHL), and 496–535 (PTATVPAVISWHPLRNWIAGGNSSGKIFLFTDETVKKEEE).

Belongs to the WD repeat DDB2/WDR76 family.

In terms of biological role, DNA-binding protein that binds to both single- and double-stranded DNA. Binds preferentially to UV-damaged DNA. May be involved in DNA-metabolic processes. This is DNA damage-binding protein CMR1 from Vanderwaltozyma polyspora (strain ATCC 22028 / DSM 70294 / BCRC 21397 / CBS 2163 / NBRC 10782 / NRRL Y-8283 / UCD 57-17) (Kluyveromyces polysporus).